The chain runs to 267 residues: 4-hydroxy-tetrahydrodipicolinate reductase (267 aa).

10-15 (GANGRM) provides a ligand contact to NAD(+). R37 contributes to the NADP(+) binding site. NAD(+) is bound by residues 98–100 (GTT) and 122–125 (ARNY). The Proton donor/acceptor role is filled by H155. A (S)-2,3,4,5-tetrahydrodipicolinate-binding site is contributed by H156. The Proton donor role is filled by K159. 165 to 166 (GT) lines the (S)-2,3,4,5-tetrahydrodipicolinate pocket.

It belongs to the DapB family.

The protein resides in the cytoplasm. The catalysed reaction is (S)-2,3,4,5-tetrahydrodipicolinate + NAD(+) + H2O = (2S,4S)-4-hydroxy-2,3,4,5-tetrahydrodipicolinate + NADH + H(+). It carries out the reaction (S)-2,3,4,5-tetrahydrodipicolinate + NADP(+) + H2O = (2S,4S)-4-hydroxy-2,3,4,5-tetrahydrodipicolinate + NADPH + H(+). It functions in the pathway amino-acid biosynthesis; L-lysine biosynthesis via DAP pathway; (S)-tetrahydrodipicolinate from L-aspartate: step 4/4. Catalyzes the conversion of 4-hydroxy-tetrahydrodipicolinate (HTPA) to tetrahydrodipicolinate. This chain is 4-hydroxy-tetrahydrodipicolinate reductase, found in Pseudoalteromonas translucida (strain TAC 125).